The following is a 483-amino-acid chain: Protein DETOXIFICATION 6 (483 aa).

Transmembrane regions (helical) follow at residues A38–V58, G69–A89, F113–M133, I146–V166, A187–L207, G211–V231, A263–L283, V292–A312, V334–I354, L376–V396, I405–L425, and L436–A456.

The protein belongs to the multi antimicrobial extrusion (MATE) (TC 2.A.66.1) family.

It is found in the membrane. In Arabidopsis thaliana (Mouse-ear cress), this protein is Protein DETOXIFICATION 6.